Consider the following 611-residue polypeptide: Aspartate--tRNA(Asp/Asn) ligase (611 aa).

An L-aspartate-binding site is contributed by glutamate 174. The tract at residues 198 to 201 is aspartate; the sequence is QLFK. Arginine 220 provides a ligand contact to L-aspartate. Residues 220–222 and glutamine 229 each bind ATP; that span reads RDE. Residue histidine 467 coordinates L-aspartate. Glutamate 501 contributes to the ATP binding site. Arginine 508 contributes to the L-aspartate binding site. 553-556 provides a ligand contact to ATP; it reads GLDR.

The protein belongs to the class-II aminoacyl-tRNA synthetase family. Type 1 subfamily. Homodimer.

The protein localises to the cytoplasm. It carries out the reaction tRNA(Asx) + L-aspartate + ATP = L-aspartyl-tRNA(Asx) + AMP + diphosphate. In terms of biological role, aspartyl-tRNA synthetase with relaxed tRNA specificity since it is able to aspartylate not only its cognate tRNA(Asp) but also tRNA(Asn). Reaction proceeds in two steps: L-aspartate is first activated by ATP to form Asp-AMP and then transferred to the acceptor end of tRNA(Asp/Asn). The chain is Aspartate--tRNA(Asp/Asn) ligase from Albidiferax ferrireducens (strain ATCC BAA-621 / DSM 15236 / T118) (Rhodoferax ferrireducens).